The primary structure comprises 445 residues: GTPase Der (445 aa).

EngA-type G domains are found at residues 3–167 and 180–353; these read PVIA…YAGQ and VKIA…AAAM. GTP is bound by residues 9–16, 56–60, 119–122, 186–193, 233–237, and 298–301; these read GRPNVGKS, DTGGF, NKAE, DTAGL, and NKWD. The 85-residue stretch at 354 to 438 folds into the KH-like domain; that stretch reads AKLPTPKLTR…PLRIEFRSST (85 aa).

It belongs to the TRAFAC class TrmE-Era-EngA-EngB-Septin-like GTPase superfamily. EngA (Der) GTPase family. In terms of assembly, associates with the 50S ribosomal subunit.

GTPase that plays an essential role in the late steps of ribosome biogenesis. In Paraburkholderia xenovorans (strain LB400), this protein is GTPase Der.